The chain runs to 552 residues: CTP synthase (552 aa).

The interval 1–270 (MTKYVFVTGG…DRIICEELKL (270 aa)) is amidoligase domain. Ser13 contributes to the CTP binding site. Ser13 contributes to the UTP binding site. ATP-binding positions include 14-19 (SLGKGI) and Asp71. The Mg(2+) site is built by Asp71 and Glu144. CTP contacts are provided by residues 151–153 (DIE), 191–196 (KTKPTQ), and Lys227. Residues 191 to 196 (KTKPTQ) and Lys227 contribute to the UTP site. The Glutamine amidotransferase type-1 domain maps to 295–547 (TIGMVGKYVD…VEAALANKQA (253 aa)). Residue Gly356 coordinates L-glutamine. The active-site Nucleophile; for glutamine hydrolysis is the Cys383. L-glutamine-binding positions include 384–387 (LGMQ), Glu407, and Arg473. Active-site residues include His520 and Glu522.

The protein belongs to the CTP synthase family. Homotetramer.

It carries out the reaction UTP + L-glutamine + ATP + H2O = CTP + L-glutamate + ADP + phosphate + 2 H(+). It catalyses the reaction L-glutamine + H2O = L-glutamate + NH4(+). The catalysed reaction is UTP + NH4(+) + ATP = CTP + ADP + phosphate + 2 H(+). The protein operates within pyrimidine metabolism; CTP biosynthesis via de novo pathway; CTP from UDP: step 2/2. With respect to regulation, allosterically activated by GTP, when glutamine is the substrate; GTP has no effect on the reaction when ammonia is the substrate. The allosteric effector GTP functions by stabilizing the protein conformation that binds the tetrahedral intermediate(s) formed during glutamine hydrolysis. Inhibited by the product CTP, via allosteric rather than competitive inhibition. Catalyzes the ATP-dependent amination of UTP to CTP with either L-glutamine or ammonia as the source of nitrogen. Regulates intracellular CTP levels through interactions with the four ribonucleotide triphosphates. This chain is CTP synthase, found in Burkholderia ambifaria (strain MC40-6).